A 187-amino-acid chain; its full sequence is Threonylcarbamoyl-AMP synthase (187 aa).

The region spanning 4-187 (TLDLDRAVAT…DARSGQILRD (184 aa)) is the YrdC-like domain.

Belongs to the SUA5 family. TsaC subfamily.

Its subcellular location is the cytoplasm. The enzyme catalyses L-threonine + hydrogencarbonate + ATP = L-threonylcarbamoyladenylate + diphosphate + H2O. Its function is as follows. Required for the formation of a threonylcarbamoyl group on adenosine at position 37 (t(6)A37) in tRNAs that read codons beginning with adenine. Catalyzes the conversion of L-threonine, HCO(3)(-)/CO(2) and ATP to give threonylcarbamoyl-AMP (TC-AMP) as the acyladenylate intermediate, with the release of diphosphate. This is Threonylcarbamoyl-AMP synthase from Xanthomonas euvesicatoria pv. vesicatoria (strain 85-10) (Xanthomonas campestris pv. vesicatoria).